The primary structure comprises 302 residues: Recombination-associated protein RdgC (302 aa).

Belongs to the RdgC family.

It is found in the cytoplasm. Its subcellular location is the nucleoid. Functionally, may be involved in recombination. The sequence is that of Recombination-associated protein RdgC from Halorhodospira halophila (strain DSM 244 / SL1) (Ectothiorhodospira halophila (strain DSM 244 / SL1)).